Reading from the N-terminus, the 258-residue chain is Pimeloyl-[acyl-carrier protein] methyl ester esterase (258 aa).

Positions 16–242 constitute an AB hydrolase-1 domain; it reads LVLLHGWGLN…AAHAPFISHP (227 aa). Residues Trp22, 82 to 83, and 143 to 147 each bind substrate; these read SL and FLALQ. The active-site Nucleophile is the Ser82. Residues Asp207 and His235 contribute to the active site. His235 contacts substrate.

This sequence belongs to the AB hydrolase superfamily. Carboxylesterase BioH family. Monomer.

It is found in the cytoplasm. It carries out the reaction 6-carboxyhexanoyl-[ACP] methyl ester + H2O = 6-carboxyhexanoyl-[ACP] + methanol + H(+). It participates in cofactor biosynthesis; biotin biosynthesis. Functionally, the physiological role of BioH is to remove the methyl group introduced by BioC when the pimeloyl moiety is complete. It allows to synthesize pimeloyl-ACP via the fatty acid synthetic pathway through the hydrolysis of the ester bonds of pimeloyl-ACP esters. This Edwardsiella ictaluri (strain 93-146) protein is Pimeloyl-[acyl-carrier protein] methyl ester esterase.